Here is a 745-residue protein sequence, read N- to C-terminus: Polyribonucleotide nucleotidyltransferase (745 aa).

Residues Asp-487 and Asp-493 each coordinate Mg(2+). The region spanning 554–613 (PSSTTVKIDKDKIKDIIGPGGKIIKEICETSNAKIDISDDGTVSIYASDRDKIKIALDKI) is the KH domain. Positions 623–691 (GEIFNGTVMK…NKGKAKLTIK (69 aa)) constitute an S1 motif domain. Residues 693–732 (AYKDHSSNNTKQKNNVKDDSESEQRRDTSKKRTWNEDNNT) are disordered. Residues 707-719 (NVKDDSESEQRRD) are compositionally biased toward basic and acidic residues.

It belongs to the polyribonucleotide nucleotidyltransferase family. Mg(2+) is required as a cofactor.

The protein localises to the cytoplasm. The catalysed reaction is RNA(n+1) + phosphate = RNA(n) + a ribonucleoside 5'-diphosphate. Its function is as follows. Involved in mRNA degradation. Catalyzes the phosphorolysis of single-stranded polyribonucleotides processively in the 3'- to 5'-direction. In Rickettsia prowazekii (strain Madrid E), this protein is Polyribonucleotide nucleotidyltransferase.